Consider the following 507-residue polypeptide: ATP synthase subunit beta (507 aa).

Residues 1-22 (MSSLANKAKSKGKSSKSKSNVN) form a disordered region. ATP is bound at residue 183 to 190 (GGAGVGKT).

The protein belongs to the ATPase alpha/beta chains family. F-type ATPases have 2 components, CF(1) - the catalytic core - and CF(0) - the membrane proton channel. CF(1) has five subunits: alpha(3), beta(3), gamma(1), delta(1), epsilon(1). CF(0) has three main subunits: a(1), b(2) and c(9-12). The alpha and beta chains form an alternating ring which encloses part of the gamma chain. CF(1) is attached to CF(0) by a central stalk formed by the gamma and epsilon chains, while a peripheral stalk is formed by the delta and b chains.

It is found in the cell inner membrane. It carries out the reaction ATP + H2O + 4 H(+)(in) = ADP + phosphate + 5 H(+)(out). Its function is as follows. Produces ATP from ADP in the presence of a proton gradient across the membrane. The catalytic sites are hosted primarily by the beta subunits. This Ehrlichia canis (strain Jake) protein is ATP synthase subunit beta.